Consider the following 299-residue polypeptide: Peroxisomal biogenesis factor 19 (299 aa).

Ala-2 carries the N-acetylalanine modification. The tract at residues 2 to 56 is docking to the peroxisome membrane and binding to PEX3; it reads AAAEGGCGAGVEADRELEELLESALDDFDKAKPSPAPSPTISAPDASGPQKRSPG. A necessary for PEX19 function on peroxisome biogenesis region spans residues 2–91; the sequence is AAAEGGCGAG…QATAEFEKAM (90 aa). Positions 25 to 63 are disordered; it reads ALDDFDKAKPSPAPSPTISAPDASGPQKRSPGDTAKDAL. Residues Ser-35, Ser-39, Ser-54, and Ser-66 each carry the phosphoserine modification. Thr-236 carries the phosphothreonine modification. Cys-296 carries the post-translational modification Cysteine methyl ester. Cys-296 carries S-farnesyl cysteine lipidation. Positions 297-299 are cleaved as a propeptide — removed in mature form; sequence LIM.

This sequence belongs to the peroxin-19 family. As to quaternary structure, interacts with a broad range of peroxisomal membrane proteins, including PEX3, PEX10, PEX11A, PEX11B, PEX12, PEX13, PEX14 and PEX16, PXMP2/PMP22, PXMP4/PMP24, SLC25A17/PMP34, ABCD1/ALDP, ABCD2/ALDRP, and ABCD3/PMP70. Also interacts with the tumor suppressor CDKN2A/p19ARF.

The protein resides in the cytoplasm. It is found in the peroxisome membrane. Functionally, necessary for early peroxisomal biogenesis. Acts both as a cytosolic chaperone and as an import receptor for peroxisomal membrane proteins (PMPs). Binds and stabilizes newly synthesized PMPs in the cytoplasm by interacting with their hydrophobic membrane-spanning domains, and targets them to the peroxisome membrane by binding to the integral membrane protein PEX3. Excludes CDKN2A from the nucleus and prevents its interaction with MDM2, which results in active degradation of TP53. In Rattus norvegicus (Rat), this protein is Peroxisomal biogenesis factor 19 (Pex19).